The chain runs to 220 residues: Peritrophin-55 (220 aa).

Residues 1 to 19 (MKSVFVCTLVLALAHHAFA) form the signal peptide. Residue N29 is glycosylated (N-linked (GlcNAc...) asparagine). The 63-residue stretch at 33–95 (ITPCLGNDII…NFIPAPTCEY (63 aa)) folds into the Chitin-binding type-2 domain. Cysteines 68 and 84 form a disulfide. Residues 116–165 (TTLKTTPSKTTPIVTTAPPSTPVPSTIVTNKPDPTTPKTTKPPKVTTTVN) show a composition bias toward low complexity. Residues 116–220 (TTLKTTPSKT…TPPSIVQLQN (105 aa)) are disordered. Residues 197–210 (PTPPGMPPTPPSFG) show a composition bias toward pro residues.

Post-translationally, glycosylated. As to expression, larval peritrophic membrane.

May bind oligosaccharide structures. This is Peritrophin-55 from Lucilia cuprina (Green bottle fly).